A 443-amino-acid polypeptide reads, in one-letter code: Protein Z-dependent protease inhibitor (443 aa).

The signal sequence occupies residues 1-23; that stretch reads MKVVPSLLLSVLLAQVWLVPGLA. The tract at residues 24–66 is disordered; sequence PSPQSPETPAPQNQTSRVVQAPREEEEDEQEASEEKAGDEEKA. Residue Asn-36 is glycosylated (N-linked (GlcNAc...) asparagine). Ser-56 bears the Phosphoserine mark. The segment covering 56-66 has biased composition (basic and acidic residues); that stretch reads SEEKAGDEEKA. The heparin-binding stretch occupies residues 136–153; it reads TKPGLLPSLFKGLRETLS. 2 N-linked (GlcNAc...) asparagine glycosylation sites follow: Asn-180 and Asn-295.

This sequence belongs to the serpin family. In terms of processing, phosphorylated by FAM20C in the extracellular medium.

The protein resides in the secreted. In terms of biological role, inhibits activity of the coagulation protease factor Xa in the presence of PROZ, calcium and phospholipids. Also inhibits factor XIa in the absence of cofactors. The sequence is that of Protein Z-dependent protease inhibitor (SERPINA10) from Pongo abelii (Sumatran orangutan).